The primary structure comprises 282 residues: Bifunctional protein FolD (282 aa).

NADP(+) contacts are provided by residues 165–167, serine 190, and isoleucine 231; that span reads NRS.

It belongs to the tetrahydrofolate dehydrogenase/cyclohydrolase family. Homodimer.

It carries out the reaction (6R)-5,10-methylene-5,6,7,8-tetrahydrofolate + NADP(+) = (6R)-5,10-methenyltetrahydrofolate + NADPH. The enzyme catalyses (6R)-5,10-methenyltetrahydrofolate + H2O = (6R)-10-formyltetrahydrofolate + H(+). It functions in the pathway one-carbon metabolism; tetrahydrofolate interconversion. Catalyzes the oxidation of 5,10-methylenetetrahydrofolate to 5,10-methenyltetrahydrofolate and then the hydrolysis of 5,10-methenyltetrahydrofolate to 10-formyltetrahydrofolate. The polypeptide is Bifunctional protein FolD (Clostridium botulinum (strain Kyoto / Type A2)).